The chain runs to 261 residues: MASPDWGYDDKNGPEQWSKLYPIANGNNQSPVDIKTSETKHDTSLKPISVSYNPATAKEIINVGHSFHVNFEDNDNRSVLKGGPFSDSYRLFQFHFHWGSTNEHGSEHTVDGVKYSAELHVAHWNSAKYSSLAEAASKADGLAVIGVLMKVGEANPKLQKVLDALQAIKTKGKRAPFTNFDPSTLLPSSLDFWTYPGSLTHPPLYESVTWIICKESISVSSEQLAQFRSLLSNVEGDNAVPMQHNNRPTQPLKGRTVRASF.

Residues 1–31 (MASPDWGYDDKNGPEQWSKLYPIANGNNQSP) are disordered. Alanine 2 is modified (N-acetylalanine). The 258-residue stretch at 4–261 (PDWGYDDKNG…LKGRTVRASF (258 aa)) folds into the Alpha-carbonic anhydrase domain. Histidine 65 acts as the Proton donor/acceptor in catalysis. Zn(2+) contacts are provided by histidine 65, histidine 68, histidine 95, histidine 97, and histidine 120. Residues threonine 200 and 200-201 (TH) contribute to the substrate site. Histidine 201 contacts Zn(2+). The interval 241 to 261 (PMQHNNRPTQPLKGRTVRASF) is disordered.

It belongs to the alpha-carbonic anhydrase family. Zn(2+) is required as a cofactor.

The protein resides in the cytoplasm. It carries out the reaction hydrogencarbonate + H(+) = CO2 + H2O. It catalyses the reaction urea = cyanamide + H2O. With respect to regulation, activated by histamine, imidazole, L-adrenaline, L- and D-histidine, and L- and D-phenylalanine. Inhibited by coumarins, sulfonamide derivatives such as acetazolamide, benzenesulfonamide and derivatives (4-carboxyethylbenzene-sulfonamide, 4-carboxyethylbenzene-sulfonamide ethyl ester, 4-(acetyl-2-aminoethyl)benzene-sulfonamide, 4-aminoethylbenzene-sulfonamide), and 'prong inhibitors' BR15, BR17, BR22 and BR30. Activated by a short exposition to Foscarnet (phosphonoformate trisodium salt), but inhibited by a long one. Esterase activity weakly reduced by cyanamide. In terms of biological role, catalyzes the reversible hydration of carbon dioxide. Can hydrate cyanamide to urea. The protein is Carbonic anhydrase 1 (CA1) of Homo sapiens (Human).